A 477-amino-acid polypeptide reads, in one-letter code: ETS translocation variant 1 (477 aa).

Ser-94 bears the Phosphoserine mark. The tract at residues 128-179 (PQVGMRPSNPPTPSSTPVSPLHHASPNTAHTPKPDRAFPAHLPPSQSIPDST) is disordered. Residues Ser-191 and Ser-216 each carry the phosphoserine; by RPS6KA1 and RPS6KA5 modification. Residue Lys-317 forms a Glycyl lysine isopeptide (Lys-Gly) (interchain with G-Cter in SUMO2) linkage. The ETS DNA-binding region spans 335–415 (LQLWQFLVAL…AGERYVYKFV (81 aa)).

Belongs to the ETS family. In terms of processing, sumoylated. Post-translationally, phosphorylated at Ser-191 and Ser-216 by RPS6KA1 and RPS6KA5; phosphorylation activates transcriptional activity. As to expression, abundant in kidney. Moderate levels seen in the heart, brain, lung, embryo and lower levels seen in spleen, intestine, testis and thymus.

It localises to the nucleus. Transcriptional activator that binds to DNA sequences containing the consensus pentanucleotide 5'-CGGA[AT]-3'. Required for olfactory dopaminergic neuron differentiation; may directly activate expression of tyrosine hydroxylase (TH). In Mus musculus (Mouse), this protein is ETS translocation variant 1.